Here is a 398-residue protein sequence, read N- to C-terminus: Chalcone synthase 1 (398 aa).

Residue 58-65 participates in CoA binding; sequence KFKRMCDK. The active-site Acyl-thioester intermediate is cysteine 167. Substrate contacts are provided by residues threonine 200 and 219–220; that span reads GD. Alanine 311 provides a ligand contact to CoA.

It belongs to the thiolase-like superfamily. Chalcone/stilbene synthases family. In terms of assembly, homodimer.

It carries out the reaction (E)-4-coumaroyl-CoA + 3 malonyl-CoA + 3 H(+) = 2',4,4',6'-tetrahydroxychalcone + 3 CO2 + 4 CoA. The protein operates within secondary metabolite biosynthesis; flavonoid biosynthesis. The primary product of this enzyme is 4,2',4',6'-tetrahydroxychalcone (also termed naringenin-chalcone or chalcone) which can under specific conditions spontaneously isomerize into naringenin. This is Chalcone synthase 1 (CHS1) from Oryza sativa subsp. indica (Rice).